Here is a 281-residue protein sequence, read N- to C-terminus: MKLAFLAGYRGQNFAGSQYQPHKRTVEGEFVAGGIELGLFSDAKEAHFRTAGRTDKGVSARRQLFSITTEKPELAIEALNFHLPDDIWCIGAAEVDEEFYPRYAARERSYRYYFPYPADVSRMQDAASRLIGTHNFSGFAKMEAGRDPVRTVTRAEVFEGKDGCPVFEVAAKSFLWNMVRGMAGALQTIGLGLCEPDVIEELLSSPTARVHPAPAEGLVFWDVVCDLSFTPMRQKREVKRSLAKEAAAARADMHTAEALLEDDPEEFWKKKVIRGYSALMK.

Asp-55 serves as the catalytic Nucleophile. Tyr-110 contributes to the substrate binding site.

This sequence belongs to the tRNA pseudouridine synthase TruA family.

The enzyme catalyses uridine(38/39/40) in tRNA = pseudouridine(38/39/40) in tRNA. In terms of biological role, formation of pseudouridine at positions 38, 39 and 40 in the anticodon stem and loop of transfer RNAs. In Methanocorpusculum labreanum (strain ATCC 43576 / DSM 4855 / Z), this protein is tRNA pseudouridine synthase A.